The following is a 648-amino-acid chain: Phosphatidylinositol-3,5-bisphosphate 3-phosphatase MTMR14 (648 aa).

Residues 1-19 (MAGARAAAAASAGSTASSG) show a composition bias toward low complexity. A disordered region spans residues 1 to 27 (MAGARAAAAASAGSTASSGSPPPQEPG). At K193 the chain carries N6-acetyllysine. N225 and N240 each carry an N-linked (GlcNAc...) asparagine glycan. The Phosphocysteine intermediate role is filled by C329. A 1,2-diacyl-sn-glycero-3-phospho-(1D-myo-inositol-3,5-bisphosphate)-binding residues include G332, W333, D334, R335, and R381. A 1,2-diacyl-sn-glycero-3-phospho-(1D-myo-inositol-3-phosphate)-binding residues include G332, W333, D334, R335, and R381. Residues 471-544 (PTQAAWRKSH…PRSVDHPLPG (74 aa)) form a disordered region. A compositionally biased stretch (basic and acidic residues) spans 494 to 506 (PSEERLPSHHGLT). S516 is modified (phosphoserine). N517 carries an N-linked (GlcNAc...) asparagine glycan. 3 positions are modified to phosphoserine: S528, S578, and S622. The residue at position 636 (R636) is an Omega-N-methylarginine.

The protein belongs to the protein-tyrosine phosphatase family. Non-receptor class myotubularin subfamily.

The protein localises to the cytoplasm. The catalysed reaction is a 1,2-diacyl-sn-glycero-3-phospho-(1D-myo-inositol-3,5-bisphosphate) + H2O = a 1,2-diacyl-sn-glycero-3-phospho-(1D-myo-inositol-5-phosphate) + phosphate. The enzyme catalyses a 1,2-diacyl-sn-glycero-3-phospho-(1D-myo-inositol-3-phosphate) + H2O = a 1,2-diacyl-sn-glycero-3-phospho-(1D-myo-inositol) + phosphate. Lipid phosphatase that specifically dephosphorylates the D-3 position of phosphatidylinositol 3-phosphate and phosphatidylinositol 3,5-bisphosphate, generating phosphatidylinositol and phosphatidylinositol 5-phosphate. This Mus musculus (Mouse) protein is Phosphatidylinositol-3,5-bisphosphate 3-phosphatase MTMR14.